A 342-amino-acid chain; its full sequence is Farnesyl pyrophosphate synthase 1 (342 aa).

Isopentenyl diphosphate is bound by residues Lys48, Arg51, and Gln86. Mg(2+) contacts are provided by Asp93 and Asp97. Arg102 is a dimethylallyl diphosphate binding site. Arg103 provides a ligand contact to isopentenyl diphosphate. Dimethylallyl diphosphate contacts are provided by Lys190, Thr191, Gln229, Lys246, and Lys255.

It belongs to the FPP/GGPP synthase family. The cofactor is Mg(2+).

It localises to the cytoplasm. The enzyme catalyses isopentenyl diphosphate + dimethylallyl diphosphate = (2E)-geranyl diphosphate + diphosphate. It catalyses the reaction isopentenyl diphosphate + (2E)-geranyl diphosphate = (2E,6E)-farnesyl diphosphate + diphosphate. It participates in isoprenoid biosynthesis; farnesyl diphosphate biosynthesis; farnesyl diphosphate from geranyl diphosphate and isopentenyl diphosphate: step 1/1. Its pathway is isoprenoid biosynthesis; geranyl diphosphate biosynthesis; geranyl diphosphate from dimethylallyl diphosphate and isopentenyl diphosphate: step 1/1. In terms of biological role, catalyzes the sequential condensation of isopentenyl pyrophosphate with the allylic pyrophosphates, dimethylallyl pyrophosphate, and then with the resultant geranylpyrophosphate to the ultimate product farnesyl pyrophosphate. The protein is Farnesyl pyrophosphate synthase 1 (FPS1) of Parthenium argentatum (Guayule rubber plant).